The primary structure comprises 170 residues: Large ribosomal subunit protein uL16 (170 aa).

The protein belongs to the universal ribosomal protein uL16 family.

The sequence is that of Large ribosomal subunit protein uL16 from Methanospirillum hungatei JF-1 (strain ATCC 27890 / DSM 864 / NBRC 100397 / JF-1).